A 304-amino-acid chain; its full sequence is MTKVSVIGAAGTVGAAAGYNLALRDVCDELVFVDIPKMEDKTVGQAADTNHGIAYDSNTVVTQGGYEDTAGSDVVVITAGIPRQPGQTRIDLAGDNAPIMDDIGSSLAEYNDDFVSITTSNPVDLLNRHLYETGDRDRHKVIGFGGRLDSARFRYVLSQRFDVPVKNVDATILGEHGDAQVPVFSKVRVDGNDPAFSADEKEEILGDLQESAMDVIERKGATQWGPATGVAHMVEAVLHDTGEVLPGSLVLDGEFGYEDTAFGVPVKLGSNGIEEVVEWDLDDYEADLMDDAAEKLRDQYDEIA.

NAD(+) contacts are provided by residues Gly-8 to Gly-14 and Asp-34. Substrate-binding residues include Arg-83 and Arg-89. NAD(+) contacts are provided by residues Asn-96 and Thr-119–Asn-121. The substrate site is built by Asn-121 and Arg-152. His-176 (proton acceptor) is an active-site residue.

It belongs to the LDH/MDH superfamily.

It carries out the reaction (S)-malate + NAD(+) = oxaloacetate + NADH + H(+). Catalyzes the reversible oxidation of malate to oxaloacetate. In Haloferax volcanii (strain ATCC 29605 / DSM 3757 / JCM 8879 / NBRC 14742 / NCIMB 2012 / VKM B-1768 / DS2) (Halobacterium volcanii), this protein is Malate dehydrogenase (mdh).